The primary structure comprises 380 residues: Endo-polygalacturonase (380 aa).

Positions Met-1–Ala-17 are cleaved as a signal peptide. Residues Val-18–Arg-42 constitute a propeptide that is removed on maturation. Cys-46 and Cys-64 form a disulfide bridge. PbH1 repeat units lie at residues Ala-178 to Ser-207, Ser-208 to Ser-229, Gly-230 to Ser-250, Val-259 to Thr-280, Val-288 to Gln-310, and Thr-322 to Ala-343. Catalysis depends on Asp-222, which acts as the Proton donor. An intrachain disulfide couples Cys-224 to Cys-240. His-244 is an active-site residue. An intrachain disulfide couples Cys-350 to Cys-353. N-linked (GlcNAc...) asparagine glycosylation is present at Asn-361. Cys-371 and Cys-380 are oxidised to a cystine.

The protein belongs to the glycosyl hydrolase 28 family.

Its subcellular location is the secreted. It carries out the reaction (1,4-alpha-D-galacturonosyl)n+m + H2O = (1,4-alpha-D-galacturonosyl)n + (1,4-alpha-D-galacturonosyl)m.. This is Endo-polygalacturonase (PG1) from Sclerotinia sclerotiorum (White mold).